Consider the following 417-residue polypeptide: Testis-specific Y-encoded-like protein 5 (417 aa).

The span at 1–25 shows a compositional bias: basic residues; the sequence is MSGRSRGRKSSRAKNRGKGRAKARV. 4 disordered regions span residues 1–55, 93–112, 127–202, and 391–417; these read MSGR…QVQA, AAGD…AASL, GTVG…EGSM, and KGKE…SQSN. Over residues 27-37 the composition is skewed to basic and acidic residues; sequence PAPDDAPRDPD. Residues 93 to 103 are compositionally biased toward low complexity; it reads AAGDHGQAAAR. The segment covering 182–191 has biased composition (basic and acidic residues); sequence GEEKKEERDA. Polar residues predominate over residues 406–417; it reads METTQPGVSQSN.

It belongs to the nucleosome assembly protein (NAP) family. Interacts with USP7.

Involved in modulation of cell growth and cellular response to gamma radiation probably via regulation of the Akt signaling pathway. Involved in regulation of p53/TP53. Suppresses p53/TP53 protein levels and promotes its ubiquitination; the function is dependent on USP7 and independent on MDM2. Proposed to displace p53/TP53 from interaction with USP7. The polypeptide is Testis-specific Y-encoded-like protein 5 (TSPYL5) (Homo sapiens (Human)).